The following is a 243-amino-acid chain: Phosphoribosyl isomerase A (243 aa).

The Proton acceptor role is filled by aspartate 10. Aspartate 129 functions as the Proton donor in the catalytic mechanism.

The protein belongs to the HisA/HisF family.

The protein resides in the cytoplasm. The catalysed reaction is 1-(5-phospho-beta-D-ribosyl)-5-[(5-phospho-beta-D-ribosylamino)methylideneamino]imidazole-4-carboxamide = 5-[(5-phospho-1-deoxy-D-ribulos-1-ylimino)methylamino]-1-(5-phospho-beta-D-ribosyl)imidazole-4-carboxamide. It catalyses the reaction N-(5-phospho-beta-D-ribosyl)anthranilate = 1-(2-carboxyphenylamino)-1-deoxy-D-ribulose 5-phosphate. It functions in the pathway amino-acid biosynthesis; L-histidine biosynthesis; L-histidine from 5-phospho-alpha-D-ribose 1-diphosphate: step 4/9. Its pathway is amino-acid biosynthesis; L-tryptophan biosynthesis; L-tryptophan from chorismate: step 3/5. Its function is as follows. Involved in both the histidine and tryptophan biosynthetic pathways. The polypeptide is Phosphoribosyl isomerase A (Mycobacteroides abscessus (strain ATCC 19977 / DSM 44196 / CCUG 20993 / CIP 104536 / JCM 13569 / NCTC 13031 / TMC 1543 / L948) (Mycobacterium abscessus)).